Reading from the N-terminus, the 316-residue chain is MEHLLKRTFDITENILLIILFIELIIGLIGNGFTALVHCMDWVKRKKMSLVNKILTALATSRIFLLWFMLVGFPISSLYPYLVTTRLMIQFTSTLWTIANHISVWFATCLSVFYFLKIANFSNSPFLYLKRRVEKVVSVTLLVSLVLLFLNILLLNLEINMCINEYHQINISYIFISYYHLSCQIQVLGSHIIFLSVPVVLSLSTFLLLIFSLWTLHKRMQQHVQGGRDARTTAHFKALQAVIAFLLLYSIFILSLLLQFWIHGLRKKPPFIAFCQVVDTAFPSFHSYVLILRDRKLRHASLSVLSWLKCRPNYVK.

Topologically, residues Met-1 to Asn-14 are extracellular. Residues Ile-15–Ala-35 traverse the membrane as a helical segment. The Cytoplasmic portion of the chain corresponds to Leu-36 to Arg-62. The helical transmembrane segment at Ile-63–Val-83 threads the bilayer. Residues Thr-84 to Thr-94 lie on the Extracellular side of the membrane. Residues Leu-95–Phe-115 traverse the membrane as a helical segment. Topologically, residues Leu-116 to Lys-135 are cytoplasmic. Residues Val-136–Asn-156 traverse the membrane as a helical segment. Over Leu-157 to His-191 the chain is Extracellular. Asn-170 carries an N-linked (GlcNAc...) asparagine glycan. A helical transmembrane segment spans residues Ile-192 to Ser-212. At Leu-213–Ala-241 the chain is on the cytoplasmic side. The helical transmembrane segment at Val-242–Ile-262 threads the bilayer. The Extracellular portion of the chain corresponds to His-263 to Pro-270. The chain crosses the membrane as a helical span at residues Phe-271–Ile-291. Topologically, residues Leu-292–Lys-316 are cytoplasmic.

This sequence belongs to the G-protein coupled receptor T2R family.

It localises to the membrane. Its function is as follows. Putative taste receptor which may play a role in the perception of bitterness. In Mus musculus (Mouse), this protein is Taste receptor type 2 member 109.